The sequence spans 314 residues: Methionyl-tRNA formyltransferase (314 aa).

110–113 (SLLP) serves as a coordination point for (6S)-5,6,7,8-tetrahydrofolate.

This sequence belongs to the Fmt family.

The catalysed reaction is L-methionyl-tRNA(fMet) + (6R)-10-formyltetrahydrofolate = N-formyl-L-methionyl-tRNA(fMet) + (6S)-5,6,7,8-tetrahydrofolate + H(+). Its function is as follows. Attaches a formyl group to the free amino group of methionyl-tRNA(fMet). The formyl group appears to play a dual role in the initiator identity of N-formylmethionyl-tRNA by promoting its recognition by IF2 and preventing the misappropriation of this tRNA by the elongation apparatus. In Bacillus cereus (strain AH187), this protein is Methionyl-tRNA formyltransferase.